The chain runs to 349 residues: tRNA pseudouridine synthase D (349 aa).

Asp77 functions as the Nucleophile in the catalytic mechanism. Positions 151 to 309 (GVPNYFGEQR…ETIDESTLKL (159 aa)) constitute a TRUD domain.

Belongs to the pseudouridine synthase TruD family.

It carries out the reaction uridine(13) in tRNA = pseudouridine(13) in tRNA. Its function is as follows. Responsible for synthesis of pseudouridine from uracil-13 in transfer RNAs. This Pseudoalteromonas translucida (strain TAC 125) protein is tRNA pseudouridine synthase D.